Here is an 87-residue protein sequence, read N- to C-terminus: UPF0473 protein PTH_1066 (87 aa).

It belongs to the UPF0473 family.

The chain is UPF0473 protein PTH_1066 from Pelotomaculum thermopropionicum (strain DSM 13744 / JCM 10971 / SI).